The primary structure comprises 115 residues: Large ribosomal subunit protein uL18 (115 aa).

This sequence belongs to the universal ribosomal protein uL18 family. Part of the 50S ribosomal subunit; part of the 5S rRNA/L5/L18/L25 subcomplex. Contacts the 5S and 23S rRNAs.

This is one of the proteins that bind and probably mediate the attachment of the 5S RNA into the large ribosomal subunit, where it forms part of the central protuberance. The sequence is that of Large ribosomal subunit protein uL18 from Vesicomyosocius okutanii subsp. Calyptogena okutanii (strain HA).